The sequence spans 159 residues: Urease subunit beta 2 (159 aa).

The interval 1–23 (MAKEPTEAAHPQPEQTKTNHKAH) is disordered.

The protein belongs to the urease beta subunit family. Heterotrimer of UreA (gamma), UreB (beta) and UreC (alpha) subunits. Three heterotrimers associate to form the active enzyme.

It is found in the cytoplasm. It carries out the reaction urea + 2 H2O + H(+) = hydrogencarbonate + 2 NH4(+). Its pathway is nitrogen metabolism; urea degradation; CO(2) and NH(3) from urea (urease route): step 1/1. This is Urease subunit beta 2 from Brucella abortus biovar 1 (strain 9-941).